Reading from the N-terminus, the 894-residue chain is B-cell lymphoma/leukemia 11B (894 aa).

Phosphoserine is present on residues Ser97 and Ser110. The residue at position 120 (Thr120) is a Phosphothreonine. Phosphoserine is present on Ser129. Lys137 participates in a covalent cross-link: Glycyl lysine isopeptide (Lys-Gly) (interchain with G-Cter in SUMO2). The C2H2-type 1 zinc-finger motif lies at 221 to 251; that stretch reads YICTTCKQPFNSAWFLLQHAQNTHGFRIYLE. The residue at position 256 (Ser256) is a Phosphoserine. Thr260 bears the Phosphothreonine mark. The residue at position 277 (Ser277) is a Phosphoserine. Arg293 bears the Omega-N-methylarginine mark. Asymmetric dimethylarginine is present on Arg322. Residue Ser358 is modified to Phosphoserine. Disordered regions lie at residues 370–428 and 471–583; these read LAGN…KSKS and KRHM…GGGA. A Phosphothreonine modification is found at Thr376. Residues Ser381, Ser398, and Ser401 each carry the phosphoserine modification. Residues 396 to 423 are compositionally biased toward pro residues; sequence QPSPKSPFLSTPPLPPMPPGGTPPPQPP. Phosphothreonine occurs at positions 406 and 417. C2H2-type zinc fingers lie at residues 427–454 and 455–482; these read KSCEFCGKTFKFQSNLIVHRRSHTGEKP and YKCQLCDHACSQASKLKRHMKTHMHKAG. Basic residues predominate over residues 471–480; it reads KRHMKTHMHK. Residues Ser483, Ser488, Ser496, and Ser497 each carry the phosphoserine modification. Basic and acidic residues predominate over residues 511–529; sequence KAADGDFRHHESDPSLGHE. The segment covering 530 to 546 has biased composition (acidic residues); that stretch reads PEEEDEEEEEEEEELLL. The segment covering 568–583 has biased composition (gly residues); the sequence is NGGGGVPGVPGAGGGA. Glycyl lysine isopeptide (Lys-Gly) (interchain with G-Cter in SUMO2) cross-links involve residues Lys591 and Lys617. A disordered region spans residues 653 to 680; the sequence is GRGGGFAPGTEPFPGLFPRKPAPLPSPG. Ser678 carries the post-translational modification Phosphoserine. Residues Lys686 and Lys723 each participate in a glycyl lysine isopeptide (Lys-Gly) (interchain with G-Cter in SUMO2) cross-link. Residues 737 to 752 are compositionally biased toward polar residues; that stretch reads FATSSEHSSENGSLRF. The disordered stretch occupies residues 737–794; the sequence is FATSSEHSSENGSLRFSTPPGDLLDGGLSGRSGTASGGSTPHLGGPGPGRPSSKEGRR. A compositionally biased stretch (low complexity) spans 753–775; it reads STPPGDLLDGGLSGRSGTASGGS. A Phosphothreonine modification is found at Thr754. A phosphoserine mark is found at Ser765 and Ser772. 3 C2H2-type zinc fingers span residues 796-823, 824-853, and 854-884; these read DTCEYCGKVFKNCSNLTVHRRSHTGERP, YKCELCNYACAQSSKLTRHMKTHGQIGKEV, and YRCDICQMPFSVYSTLEKHMKKWHGEHLLTN. Lys851 carries the N6-acetyllysine modification. Residue Lys887 forms a Glycyl lysine isopeptide (Lys-Gly) (interchain with G-Cter in SUMO2) linkage.

Interacts with TFCOUP1, SIRT1, ARP1 and EAR2. Interacts with EP300; the interaction is detected in activated T-lymphocytes, but not under resting conditions. Post-translationally, sumoylated with SUMO1. As to expression, highly expressed in brain and in malignant T-cell lines derived from patients with adult T-cell leukemia/lymphoma.

The protein localises to the nucleus. Functionally, key regulator of both differentiation and survival of T-lymphocytes during thymocyte development in mammals. Essential in controlling the responsiveness of hematopoietic stem cells to chemotactic signals by modulating the expression of the receptors CCR7 and CCR9, which direct the movement of progenitor cells from the bone marrow to the thymus. Is a regulator of IL2 promoter and enhances IL2 expression in activated CD4(+) T-lymphocytes. Tumor-suppressor that represses transcription through direct, TFCOUP2-independent binding to a GC-rich response element. May also function in the P53-signaling pathway. This Homo sapiens (Human) protein is B-cell lymphoma/leukemia 11B (BCL11B).